Reading from the N-terminus, the 114-residue chain is Aspartate 1-decarboxylase (114 aa).

S25 acts as the Schiff-base intermediate with substrate; via pyruvic acid in catalysis. A Pyruvic acid (Ser) modification is found at S25. Residue T57 coordinates substrate. The active-site Proton donor is Y58. Residue 73–75 participates in substrate binding; that stretch reads GAA.

It belongs to the PanD family. Heterooctamer of four alpha and four beta subunits. Requires pyruvate as cofactor. Is synthesized initially as an inactive proenzyme, which is activated by self-cleavage at a specific serine bond to produce a beta-subunit with a hydroxyl group at its C-terminus and an alpha-subunit with a pyruvoyl group at its N-terminus.

The protein localises to the cytoplasm. It carries out the reaction L-aspartate + H(+) = beta-alanine + CO2. It participates in cofactor biosynthesis; (R)-pantothenate biosynthesis; beta-alanine from L-aspartate: step 1/1. Its function is as follows. Catalyzes the pyruvoyl-dependent decarboxylation of aspartate to produce beta-alanine. The chain is Aspartate 1-decarboxylase from Thermotoga sp. (strain RQ2).